A 313-amino-acid polypeptide reads, in one-letter code: Short-chain dehydrogenase/reductase family 9C member 7 (313 aa).

NADP(+) is bound at residue 29–53 (FITGCDSGFGNLLAKQLVDRGMKVL). Ser160 contacts substrate. Tyr172 functions as the Proton acceptor in the catalytic mechanism. The residue at position 185 (Ser185) is a Phosphoserine.

Belongs to the short-chain dehydrogenases/reductases (SDR) family. Highly expressed in liver.

Its subcellular location is the cytoplasm. The catalysed reaction is a N-[omega-(9R,10R)-epoxy-(13R)-hydroxy-(11E)-octadecenoyloxy]acyl-beta-D-glucosyl-(1&lt;-&gt;1)-sphing-4E-enine + NAD(+) = a N-[omega-(9R,10R)-epoxy-13-oxo-(11E)-octadecenoyloxy]acyl-beta-D-glucosyl-(1&lt;-&gt;1)-sphing-4E-enine + NADH + H(+). It catalyses the reaction a N-[omega-(9R,10R)-epoxy-(13R)-hydroxy-(11E)-octadecenoyloxy]-acylsphing-4E-enine + NAD(+) = a N-[omega-(9R,10R)-epoxy-13-oxo-(11E)-octadecenoyloxy]-acylsphing-4E-enine + NADH + H(+). Plays a crucial role in the formation of the epidermal permeability barrier. Catalyzes the NAD+-dependent dehydrogenation of the linoleate 9,10-trans-epoxy-11E-13-alcohol esterified in omega-O-acylceramides (such as in N-[omega-(9R,10R)-epoxy-(13R)-hydroxy-(11E)-octadecenoyloxy]-acylsphing-4E-enine) to the corresponding 13-ketone, the reactive moiety required for binding of epidermal ceramides to proteins. Displays weak conversion of all-trans-retinal to all-trans-retinol in the presence of NADH. Has apparently no steroid dehydrogenase activity. The polypeptide is Short-chain dehydrogenase/reductase family 9C member 7 (Sdr9c7) (Mus musculus (Mouse)).